We begin with the raw amino-acid sequence, 309 residues long: Taste receptor type 2 member 45 (309 aa).

Residue Met1 is a topological domain, extracellular. The chain crosses the membrane as a helical span at residues 2–22 (ITFLPIIFSILVVVTFVIGNF). At 23–55 (ANGFIALVNSTEWVKRQKISFADQIVTALAVSR) the chain is on the cytoplasmic side. The helical transmembrane segment at 56-76 (VGLLWVLLLNWYSTVLNPAFY) threads the bilayer. Residues 77–98 (SVELRTTAYNIWAVTGHFSNWL) lie on the Extracellular side of the membrane. A helical transmembrane segment spans residues 99-119 (ATSLSIFYLLKIANFSNLIFL). Residues 120 to 126 (HLKRRVK) are Cytoplasmic-facing. The chain crosses the membrane as a helical span at residues 127–147 (SVILVMLLGPLLFLACHLFVV). Topologically, residues 148–178 (NMNQIVWTKEYEGNMTWKIKLRRAMYLSDTT) are extracellular. Residue Asn161 is glycosylated (N-linked (GlcNAc...) asparagine). The chain crosses the membrane as a helical span at residues 179-199 (VTMLANLVPFTVTLISFLLLV). Topologically, residues 200–229 (CSLCEHLKKMQLHGKGSQDPSTKVHIKALQ) are cytoplasmic. Residues 230-250 (TVISFLLLCAIYFVSVIISVW) form a helical membrane-spanning segment. Over 251–259 (SFKNLENKP) the chain is Extracellular. Residues 260–280 (VFMFCQAIGFSCSSAHPFILI) form a helical membrane-spanning segment. Residues 281–309 (WGNKKLKQPFLSVLWQMRYWVKGEKPSSS) lie on the Cytoplasmic side of the membrane.

The protein belongs to the G-protein coupled receptor T2R family.

The protein resides in the membrane. Receptor that may play a role in the perception of bitterness and is gustducin-linked. May play a role in sensing the chemical composition of the gastrointestinal content. The activity of this receptor may stimulate alpha gustducin, mediate PLC-beta-2 activation and lead to the gating of TRPM5. The sequence is that of Taste receptor type 2 member 45 (TAS2R45) from Pan paniscus (Pygmy chimpanzee).